We begin with the raw amino-acid sequence, 607 residues long: Glutamyl-tRNA(Gln) amidotransferase subunit E (607 aa).

This sequence belongs to the GatB/GatE family. GatE subfamily. As to quaternary structure, heterodimer of GatD and GatE.

The catalysed reaction is L-glutamyl-tRNA(Gln) + L-glutamine + ATP + H2O = L-glutaminyl-tRNA(Gln) + L-glutamate + ADP + phosphate + H(+). Allows the formation of correctly charged Gln-tRNA(Gln) through the transamidation of misacylated Glu-tRNA(Gln) in organisms which lack glutaminyl-tRNA synthetase. The reaction takes place in the presence of glutamine and ATP through an activated gamma-phospho-Glu-tRNA(Gln). The GatDE system is specific for glutamate and does not act on aspartate. The sequence is that of Glutamyl-tRNA(Gln) amidotransferase subunit E from Pyrobaculum islandicum (strain DSM 4184 / JCM 9189 / GEO3).